The primary structure comprises 417 residues: Serine hydroxymethyltransferase (417 aa).

Residues Leu121 and 125-127 (GHL) each bind (6S)-5,6,7,8-tetrahydrofolate. Position 230 is an N6-(pyridoxal phosphate)lysine (Lys230). Residue Glu245 participates in (6S)-5,6,7,8-tetrahydrofolate binding.

Belongs to the SHMT family. Homodimer. Requires pyridoxal 5'-phosphate as cofactor.

It is found in the cytoplasm. It catalyses the reaction (6R)-5,10-methylene-5,6,7,8-tetrahydrofolate + glycine + H2O = (6S)-5,6,7,8-tetrahydrofolate + L-serine. The protein operates within one-carbon metabolism; tetrahydrofolate interconversion. Its pathway is amino-acid biosynthesis; glycine biosynthesis; glycine from L-serine: step 1/1. Functionally, catalyzes the reversible interconversion of serine and glycine with tetrahydrofolate (THF) serving as the one-carbon carrier. This reaction serves as the major source of one-carbon groups required for the biosynthesis of purines, thymidylate, methionine, and other important biomolecules. Also exhibits THF-independent aldolase activity toward beta-hydroxyamino acids, producing glycine and aldehydes, via a retro-aldol mechanism. The chain is Serine hydroxymethyltransferase from Desulfitobacterium hafniense (strain DSM 10664 / DCB-2).